Here is a 152-residue protein sequence, read N- to C-terminus: Protein SprT-like (152 aa).

Positions Q7–P147 constitute a SprT-like domain. Residue H67 participates in Zn(2+) binding. The active site involves E68. H71 contacts Zn(2+).

It belongs to the SprT family. Zn(2+) is required as a cofactor.

The protein resides in the cytoplasm. The protein is Protein SprT-like of Bacillus cereus (strain G9842).